The primary structure comprises 350 residues: Hydroxymethylglutaryl-CoA synthase (350 aa).

Glutamate 83 functions as the Proton donor/acceptor in the catalytic mechanism. Residue cysteine 115 is the Acyl-thioester intermediate of the active site. The (3S)-3-hydroxy-3-methylglutaryl-CoA site is built by cysteine 115 and threonine 156. A CoA-binding site is contributed by arginine 204. Residues threonine 206 and histidine 239 each coordinate (3S)-3-hydroxy-3-methylglutaryl-CoA. The active-site Proton donor/acceptor is the histidine 239. Residue lysine 244 coordinates CoA. Residues asparagine 271 and serine 301 each contribute to the (3S)-3-hydroxy-3-methylglutaryl-CoA site.

It belongs to the thiolase-like superfamily. Archaeal HMG-CoA synthase family. As to quaternary structure, interacts with acetoacetyl-CoA thiolase that catalyzes the precedent step in the pathway and with a DUF35 protein. The acetoacetyl-CoA thiolase/HMG-CoA synthase complex channels the intermediate via a fused CoA-binding site, which allows for efficient coupling of the endergonic thiolase reaction with the exergonic HMGCS reaction.

It catalyses the reaction acetoacetyl-CoA + acetyl-CoA + H2O = (3S)-3-hydroxy-3-methylglutaryl-CoA + CoA + H(+). Its pathway is metabolic intermediate biosynthesis; (R)-mevalonate biosynthesis; (R)-mevalonate from acetyl-CoA: step 2/3. Its function is as follows. Catalyzes the condensation of acetyl-CoA with acetoacetyl-CoA to form 3-hydroxy-3-methylglutaryl-CoA (HMG-CoA). Functions in the mevalonate (MVA) pathway leading to isopentenyl diphosphate (IPP), a key precursor for the biosynthesis of isoprenoid compounds that are building blocks of archaeal membrane lipids. In Thermococcus sibiricus (strain DSM 12597 / MM 739), this protein is Hydroxymethylglutaryl-CoA synthase.